The chain runs to 265 residues: tRNA (guanine-N(7)-)-methyltransferase (265 aa).

A disordered region spans residues 1 to 40; sequence MIHDDDPNAPGAPHDDDATAAPASATRAAPAAGDDDDANP. A compositionally biased stretch (low complexity) spans 19 to 32; that stretch reads TAAPASATRAAPAA. Glu-95, Glu-120, Asp-147, and Asp-170 together coordinate S-adenosyl-L-methionine. Residue Asp-170 is part of the active site. Substrate is bound by residues Lys-174, Asp-206, and 241–244; that span reads TKFE.

This sequence belongs to the class I-like SAM-binding methyltransferase superfamily. TrmB family.

The enzyme catalyses guanosine(46) in tRNA + S-adenosyl-L-methionine = N(7)-methylguanosine(46) in tRNA + S-adenosyl-L-homocysteine. The protein operates within tRNA modification; N(7)-methylguanine-tRNA biosynthesis. In terms of biological role, catalyzes the formation of N(7)-methylguanine at position 46 (m7G46) in tRNA. The sequence is that of tRNA (guanine-N(7)-)-methyltransferase from Burkholderia pseudomallei (strain 1710b).